Reading from the N-terminus, the 251-residue chain is Uridylate kinase (251 aa).

An ATP-binding site is contributed by 24–27 (KISG). The interval 32–37 (GDQGFG) is involved in allosteric activation by GTP. Glycine 66 serves as a coordination point for UMP. ATP contacts are provided by glycine 67 and arginine 71. Residues aspartate 86 and 147–154 (TGNPYFTT) contribute to the UMP site. Residues asparagine 175, tyrosine 181, and aspartate 184 each coordinate ATP.

The protein belongs to the UMP kinase family. In terms of assembly, homohexamer.

It is found in the cytoplasm. The enzyme catalyses UMP + ATP = UDP + ADP. It participates in pyrimidine metabolism; CTP biosynthesis via de novo pathway; UDP from UMP (UMPK route): step 1/1. Allosterically activated by GTP. Inhibited by UTP. Its function is as follows. Catalyzes the reversible phosphorylation of UMP to UDP. This chain is Uridylate kinase, found in Ruegeria pomeroyi (strain ATCC 700808 / DSM 15171 / DSS-3) (Silicibacter pomeroyi).